A 143-amino-acid chain; its full sequence is Large ribosomal subunit protein uL11 (143 aa).

This sequence belongs to the universal ribosomal protein uL11 family. Part of the ribosomal stalk of the 50S ribosomal subunit. Interacts with L10 and the large rRNA to form the base of the stalk. L10 forms an elongated spine to which L12 dimers bind in a sequential fashion forming a multimeric L10(L12)X complex. In terms of processing, one or more lysine residues are methylated.

Forms part of the ribosomal stalk which helps the ribosome interact with GTP-bound translation factors. The protein is Large ribosomal subunit protein uL11 of Paraburkholderia xenovorans (strain LB400).